Here is a 468-residue protein sequence, read N- to C-terminus: ATP synthase subunit beta (468 aa).

155-162 is a binding site for ATP; the sequence is GGAGVGKT.

Belongs to the ATPase alpha/beta chains family. In terms of assembly, F-type ATPases have 2 components, CF(1) - the catalytic core - and CF(0) - the membrane proton channel. CF(1) has five subunits: alpha(3), beta(3), gamma(1), delta(1), epsilon(1). CF(0) has three main subunits: a(1), b(2) and c(9-12). The alpha and beta chains form an alternating ring which encloses part of the gamma chain. CF(1) is attached to CF(0) by a central stalk formed by the gamma and epsilon chains, while a peripheral stalk is formed by the delta and b chains.

Its subcellular location is the cell membrane. The catalysed reaction is ATP + H2O + 4 H(+)(in) = ADP + phosphate + 5 H(+)(out). Functionally, produces ATP from ADP in the presence of a proton gradient across the membrane. The catalytic sites are hosted primarily by the beta subunits. This chain is ATP synthase subunit beta, found in Streptococcus agalactiae serotype III (strain NEM316).